The following is a 381-amino-acid chain: Transaldolase 1 (381 aa).

Lys-149 acts as the Schiff-base intermediate with substrate in catalysis.

This sequence belongs to the transaldolase family. Type 2 subfamily.

It is found in the cytoplasm. The enzyme catalyses D-sedoheptulose 7-phosphate + D-glyceraldehyde 3-phosphate = D-erythrose 4-phosphate + beta-D-fructose 6-phosphate. It functions in the pathway carbohydrate degradation; pentose phosphate pathway; D-glyceraldehyde 3-phosphate and beta-D-fructose 6-phosphate from D-ribose 5-phosphate and D-xylulose 5-phosphate (non-oxidative stage): step 2/3. Functionally, transaldolase is important for the balance of metabolites in the pentose-phosphate pathway. The polypeptide is Transaldolase 1 (tal1) (Streptomyces coelicolor (strain ATCC BAA-471 / A3(2) / M145)).